An 877-amino-acid chain; its full sequence is Probable alpha/beta-glucosidase agdC (877 aa).

The first 14 residues, 1–14, serve as a signal peptide directing secretion; it reads MLGSLLLLAPLAGA. 3 N-linked (GlcNAc...) asparagine glycosylation sites follow: Asn171, Asn293, and Asn373. The active-site Nucleophile is the Asp422. Glu425 is an active-site residue. A disordered region spans residues 432–476; sequence DPCTDPERYSSENNLPPAPPPVRSSSPRPLPGFPADFQPSSASRS. The segment covering 447–463 has biased composition (pro residues); that stretch reads PPAPPPVRSSSPRPLPG. Asn508 carries N-linked (GlcNAc...) asparagine glycosylation. Catalysis depends on Asp573, which acts as the Proton donor. 3 N-linked (GlcNAc...) asparagine glycosylation sites follow: Asn574, Asn610, and Asn744.

The protein belongs to the glycosyl hydrolase 31 family.

The protein localises to the secreted. It catalyses the reaction Hydrolysis of terminal, non-reducing (1-&gt;4)-linked alpha-D-glucose residues with release of alpha-D-glucose.. It carries out the reaction Hydrolysis of terminal, non-reducing beta-D-glucosyl residues with release of beta-D-glucose.. Glucosidase involved in the degradation of cellulosic biomass. Has both alpha- and beta-glucosidase activity. The sequence is that of Probable alpha/beta-glucosidase agdC (agdC) from Aspergillus oryzae (strain ATCC 42149 / RIB 40) (Yellow koji mold).